The sequence spans 349 residues: Ferredoxin--NADP reductase 1 (349 aa).

FAD is bound by residues Glu-36, Lys-44, Tyr-48, Val-88, Leu-123, Asp-290, and Ser-331.

It belongs to the ferredoxin--NADP reductase type 2 family. Homodimer. It depends on FAD as a cofactor.

It carries out the reaction 2 reduced [2Fe-2S]-[ferredoxin] + NADP(+) + H(+) = 2 oxidized [2Fe-2S]-[ferredoxin] + NADPH. This chain is Ferredoxin--NADP reductase 1, found in Bacillus cereus (strain ATCC 10987 / NRS 248).